We begin with the raw amino-acid sequence, 737 residues long: Polyribonucleotide nucleotidyltransferase (737 aa).

2 residues coordinate Mg(2+): aspartate 514 and aspartate 520. One can recognise a KH domain in the interval 580-639 (PRIITVKIPVDKIGEVIGPKGKMINQIQEDTGADITIEDDGTIYIGAQAGSQAEAARATI). The region spanning 651 to 723 (GERYLGTVVK…SRGKLSLIPV (73 aa)) is the S1 motif domain.

Belongs to the polyribonucleotide nucleotidyltransferase family. It depends on Mg(2+) as a cofactor.

It is found in the cytoplasm. It carries out the reaction RNA(n+1) + phosphate = RNA(n) + a ribonucleoside 5'-diphosphate. Involved in mRNA degradation. Catalyzes the phosphorolysis of single-stranded polyribonucleotides processively in the 3'- to 5'-direction. The sequence is that of Polyribonucleotide nucleotidyltransferase from Streptomyces griseus subsp. griseus (strain JCM 4626 / CBS 651.72 / NBRC 13350 / KCC S-0626 / ISP 5235).